The following is a 659-amino-acid chain: Biosynthetic arginine decarboxylase (659 aa).

The residue at position 128 (Lys128) is an N6-(pyridoxal phosphate)lysine. Substrate is bound at residue 308–318 (FDVGGGLGVDY).

The protein belongs to the Orn/Lys/Arg decarboxylase class-II family. SpeA subfamily. It depends on Mg(2+) as a cofactor. Requires pyridoxal 5'-phosphate as cofactor.

The catalysed reaction is L-arginine + H(+) = agmatine + CO2. Its pathway is amine and polyamine biosynthesis; agmatine biosynthesis; agmatine from L-arginine: step 1/1. Its function is as follows. Catalyzes the biosynthesis of agmatine from arginine. The polypeptide is Biosynthetic arginine decarboxylase (Yersinia pestis).